A 431-amino-acid chain; its full sequence is UDP-N-acetylglucosamine--N-acetylmuramyl-(pentapeptide) pyrophosphoryl-undecaprenol N-acetylglucosamine transferase (431 aa).

UDP-N-acetyl-alpha-D-glucosamine-binding positions include 29 to 31 (TGG), asparagine 141, arginine 177, serine 205, isoleucine 258, and glutamine 303. Residues 370–431 (AGSGDGQPPA…NPGASAGGAP (62 aa)) are disordered. A compositionally biased stretch (polar residues) spans 395–420 (KQGSMQTSVNGDRSAQLIATNPQSRL).

The protein belongs to the glycosyltransferase 28 family. MurG subfamily.

The protein localises to the cell inner membrane. The catalysed reaction is di-trans,octa-cis-undecaprenyl diphospho-N-acetyl-alpha-D-muramoyl-L-alanyl-D-glutamyl-meso-2,6-diaminopimeloyl-D-alanyl-D-alanine + UDP-N-acetyl-alpha-D-glucosamine = di-trans,octa-cis-undecaprenyl diphospho-[N-acetyl-alpha-D-glucosaminyl-(1-&gt;4)]-N-acetyl-alpha-D-muramoyl-L-alanyl-D-glutamyl-meso-2,6-diaminopimeloyl-D-alanyl-D-alanine + UDP + H(+). It participates in cell wall biogenesis; peptidoglycan biosynthesis. Functionally, cell wall formation. Catalyzes the transfer of a GlcNAc subunit on undecaprenyl-pyrophosphoryl-MurNAc-pentapeptide (lipid intermediate I) to form undecaprenyl-pyrophosphoryl-MurNAc-(pentapeptide)GlcNAc (lipid intermediate II). In Xanthomonas euvesicatoria pv. vesicatoria (strain 85-10) (Xanthomonas campestris pv. vesicatoria), this protein is UDP-N-acetylglucosamine--N-acetylmuramyl-(pentapeptide) pyrophosphoryl-undecaprenol N-acetylglucosamine transferase.